We begin with the raw amino-acid sequence, 427 residues long: Peptidase B (427 aa).

Residues Lys195 and Asp200 each coordinate Mn(2+). Lys207 is an active-site residue. Mn(2+)-binding residues include Asp218, Asp277, and Glu279. Residue Arg281 is part of the active site.

The protein belongs to the peptidase M17 family. As to quaternary structure, homohexamer. It depends on Mn(2+) as a cofactor.

It is found in the cytoplasm. It catalyses the reaction Release of an N-terminal amino acid, Xaa, from a peptide or arylamide. Xaa is preferably Glu or Asp but may be other amino acids, including Leu, Met, His, Cys and Gln.. Functionally, probably plays an important role in intracellular peptide degradation. This is Peptidase B from Salmonella dublin (strain CT_02021853).